The primary structure comprises 325 residues: MTTDVKDELSRLVVKSVSARRAEVTSLLRFAGGLHIVGGRVVVEAELDLGSIARRLRKEIFELYGYTAVVHVLSASGIRKSTRYVLRVANDGEALARQTGLLDMRGRPVRGLPAQVVGGSIDDAEAAWRGAFLAHGSLTEPGRSSALEVSCPGPEAALALVGAARRLGVGAKAREVRGADRVVVRDGEAIGALLTRMGAQDTRLVWEERRLRREVRATANRLANFDDANLRRSARAAVAAAARVERALEILGDTVPEHLASAGKLRVEHRQASLEELGRLADPPMTKDAVAGRIRRLLSMADRKAKVDGIPDTESVVTPDLLEDA.

Positions S273–K306 form a DNA-binding region, H-T-H motif.

This sequence belongs to the WhiA family.

Functionally, involved in cell division and chromosome segregation. The polypeptide is Probable cell division protein WhiA (Mycobacterium bovis (strain BCG / Tokyo 172 / ATCC 35737 / TMC 1019)).